A 429-amino-acid chain; its full sequence is Adenylosuccinate synthetase (429 aa).

Residues 12-18 (GDEGKGK) and 40-42 (GHT) each bind GTP. Aspartate 13 serves as the catalytic Proton acceptor. Positions 13 and 40 each coordinate Mg(2+). IMP-binding positions include 13–16 (DEGK), 38–41 (NAGH), threonine 128, arginine 142, glutamine 223, and arginine 302. Catalysis depends on histidine 41, which acts as the Proton donor. A substrate-binding site is contributed by 298 to 304 (TVTGRPR). Residues arginine 304, 330-332 (LLD), and 412-414 (SVG) each bind GTP.

This sequence belongs to the adenylosuccinate synthetase family. Homodimer. The cofactor is Mg(2+).

Its subcellular location is the cytoplasm. It carries out the reaction IMP + L-aspartate + GTP = N(6)-(1,2-dicarboxyethyl)-AMP + GDP + phosphate + 2 H(+). Its pathway is purine metabolism; AMP biosynthesis via de novo pathway; AMP from IMP: step 1/2. In terms of biological role, plays an important role in the de novo pathway of purine nucleotide biosynthesis. Catalyzes the first committed step in the biosynthesis of AMP from IMP. The sequence is that of Adenylosuccinate synthetase from Lactobacillus delbrueckii subsp. bulgaricus (strain ATCC 11842 / DSM 20081 / BCRC 10696 / JCM 1002 / NBRC 13953 / NCIMB 11778 / NCTC 12712 / WDCM 00102 / Lb 14).